The following is a 615-amino-acid chain: DNA mismatch repair protein MutL (615 aa).

Belongs to the DNA mismatch repair MutL/HexB family.

Its function is as follows. This protein is involved in the repair of mismatches in DNA. It is required for dam-dependent methyl-directed DNA mismatch repair. May act as a 'molecular matchmaker', a protein that promotes the formation of a stable complex between two or more DNA-binding proteins in an ATP-dependent manner without itself being part of a final effector complex. This chain is DNA mismatch repair protein MutL, found in Histophilus somni (strain 2336) (Haemophilus somnus).